Here is an 833-residue protein sequence, read N- to C-terminus: Ribosome biogenesis protein BOP1 homolog (833 aa).

Residues 20-202 (NKKSEPIAVS…DSDDSSEDES (183 aa)) form a disordered region. Over residues 36 to 56 (SKPTTTATTTVSKSPVSTITT) the composition is skewed to low complexity. Acidic residues-rich tracts occupy residues 90–111 (SEDD…EDVE) and 136–150 (EAEE…EDDS). Over residues 154–170 (SSKSSSSTTTTTTTTKK) the composition is skewed to low complexity. Positions 182 to 192 (KQWTNDPNQFY) are enriched in polar residues. Acidic residues predominate over residues 193-202 (DSDDSSEDES). 3 WD repeats span residues 331–370 (TKAI…KEKT), 488–527 (GHKA…CLYS), and 529–569 (EVES…TQTE). Positions 568–592 (TEHSPETEKILTKPPTDSSTEQQQN) are disordered. A compositionally biased stretch (polar residues) spans 582 to 592 (PTDSSTEQQQN). WD repeat units follow at residues 618–660 (HHPF…TQSP), 663–701 (KSKT…LIKK), 704–743 (TGCR…RPYK), 747–786 (YHKM…DLLQ), and 802–833 (INDL…LYTN).

It belongs to the WD repeat BOP1/ERB1 family.

The protein resides in the nucleus. It localises to the nucleolus. The protein localises to the nucleoplasm. In terms of biological role, required for maturation of ribosomal RNAs and formation of the large ribosomal subunit. This chain is Ribosome biogenesis protein BOP1 homolog, found in Dictyostelium discoideum (Social amoeba).